Here is a 142-residue protein sequence, read N- to C-terminus: Large ribosomal subunit protein uL11 (142 aa).

Belongs to the universal ribosomal protein uL11 family. In terms of assembly, part of the ribosomal stalk of the 50S ribosomal subunit. Interacts with L10 and the large rRNA to form the base of the stalk. L10 forms an elongated spine to which L12 dimers bind in a sequential fashion forming a multimeric L10(L12)X complex. Post-translationally, one or more lysine residues are methylated.

Forms part of the ribosomal stalk which helps the ribosome interact with GTP-bound translation factors. This chain is Large ribosomal subunit protein uL11, found in Nitrobacter hamburgensis (strain DSM 10229 / NCIMB 13809 / X14).